The sequence spans 585 residues: Putative ABC transporter ATP-binding protein MG187 (585 aa).

Residues 8–468 form the ABC transporter domain; sequence IELKNIVVDF…PANEFVARFL (461 aa). 40–47 is an ATP binding site; sequence GPSGCGKT.

It belongs to the ABC transporter superfamily.

The chain is Putative ABC transporter ATP-binding protein MG187 from Mycoplasma genitalium (strain ATCC 33530 / DSM 19775 / NCTC 10195 / G37) (Mycoplasmoides genitalium).